The primary structure comprises 204 residues: Histone chaperone ASF1A (204 aa).

The tract at residues 1–156 (MAKVQVNNVV…TRFHINWEDN (156 aa)) is interaction with histone H3, CHAF1B, and HIRA. The short motif at 31 to 37 (IEDLSED) is the Required for interaction with HIRA element. Residues 155 to 204 (DNTEKLEDAESSNPNLQSLLSTDALPSASKGWSTSENSLNVMLESHMDCM) are required for interaction with HIRA. Phosphoserine is present on Ser192.

Belongs to the ASF1 family. Interacts with histone H3 (via C-terminus), including histone H3.1, H3.2 and H3.3, and histone H4; the interaction with H3 is direct. Probably interacts with the heterodimeric form of H3-H4 taking the place of the second dimer. Interacts with the CHAF1A, CHAF1B and RBBP4 subunits of the CAF-1 complex. Interacts with CABIN1, HAT1, HIRA, NASP, TAF1 and UBN1. Found in a soluble complex with NASP and histones H3 and H4; the interaction with NASP is probably indirect and mediated by H3-H4. Interacts with CDAN1. Found in a cytosolic complex with IPO4 and histones H3 and H4. Interacts with CREBBP. Post-translationally, phosphorylated by TLK1 and TLK2. Highly phosphorylated in S-phase and at lower levels in M-phase. TLK2-mediated phosphorylation at Ser-192 prevents proteasome-dependent degradation. Phosphorylation at Ser-192 by PRKDC in response to DNA damage promotes the histone chaperone activity and ability to replace histones at double-strand breaks (DSBs) at stalled or collapsed replication forks, leading to RAD51 recruitment.

Its subcellular location is the nucleus. It is found in the chromosome. Functionally, histone chaperone that facilitates histone deposition and histone exchange and removal during nucleosome assembly and disassembly. Cooperates with chromatin assembly factor 1 (CAF-1) to promote replication-dependent chromatin assembly and with HIRA to promote replication-independent chromatin assembly. Promotes homologous recombination-mediated repair of double-strand breaks (DSBs) at stalled or collapsed replication forks: acts by mediating histone replacement at DSBs, leading to recruitment of the MMS22L-TONSL complex and subsequent loading of RAD51. Also involved in the nuclear import of the histone H3-H4 dimer together with importin-4 (IPO4): specifically recognizes and binds newly synthesized histones with the monomethylation of H3 'Lys-9' and acetylation at 'Lys-14' (H3K9me1K14ac) marks, and diacetylation at 'Lys-5' and 'Lys-12' of H4 (H4K5K12ac) marks in the cytosol. Required for the formation of senescence-associated heterochromatin foci (SAHF) and efficient senescence-associated cell cycle exit. This is Histone chaperone ASF1A from Mus musculus (Mouse).